The primary structure comprises 243 residues: DNA repair protein RecO (243 aa).

This sequence belongs to the RecO family.

Its function is as follows. Involved in DNA repair and RecF pathway recombination. This is DNA repair protein RecO from Vibrio parahaemolyticus serotype O3:K6 (strain RIMD 2210633).